The sequence spans 337 residues: Draxin (337 aa).

An N-terminal signal peptide occupies residues 1–24; that stretch reads MLLLALLLLLELSLAGSLGPGSSA. Disordered regions lie at residues 36-67, 107-133, and 234-261; these read GPALWTPQASHHRRRGLGKKERGPGTPGWTQD, RPYPEKETQAPGSERVKKRGREHKRRK, and WPSTRKKEKHRGKLSSDGNETSPAKGEP. 2 stretches are compositionally biased toward basic residues: residues 122 to 133 and 237 to 246; these read VKKRGREHKRRK and TRKKEKHRGK. N-linked (GlcNAc...) asparagine glycosylation is present at asparagine 252.

The protein belongs to the draxin family. Interacts with LRP6.

The protein resides in the secreted. In terms of biological role, chemorepulsive axon guidance protein required for the development of spinal cord and forebrain commissures. Acts as a chemorepulsive guidance protein for commissural axons during development. Able to inhibit or repel neurite outgrowth from dorsal spinal cord. Inhibits the stabilization of cytosolic beta-catenin (CTNNB1) via its interaction with LRP6, thereby acting as an antagonist of Wnt signaling pathway. This Bos taurus (Bovine) protein is Draxin.